Reading from the N-terminus, the 374-residue chain is CC-adding tRNA nucleotidyltransferase (374 aa).

Position 39 to 42 (39 to 42 (GAVR)) interacts with CTP. Residues aspartate 52 and aspartate 54 each coordinate Mg(2+). CTP contacts are provided by residues 126–127 (RD), asparagine 131, 171–180 (DASRLVRAAR), and arginine 209.

This sequence belongs to the tRNA nucleotidyltransferase/poly(A) polymerase family. The cofactor is Mg(2+).

It catalyses the reaction a tRNA precursor + 2 CTP = a tRNA with a 3' CC end + 2 diphosphate. Functionally, tRNA nucleotidyltransferase involved in the synthesis of the tRNA CCA terminus. Adds the two cytidine residues to tRNA. This chain is CC-adding tRNA nucleotidyltransferase, found in Deinococcus radiodurans (strain ATCC 13939 / DSM 20539 / JCM 16871 / CCUG 27074 / LMG 4051 / NBRC 15346 / NCIMB 9279 / VKM B-1422 / R1).